Reading from the N-terminus, the 170-residue chain is Protein GrpE (170 aa).

Positions 1 to 29 (MSEEIKNEEIVEEVEATEEVVETPEKSEL) are disordered. The segment covering 10–22 (IVEEVEATEEVVE) has biased composition (acidic residues).

The protein belongs to the GrpE family. In terms of assembly, homodimer.

It localises to the cytoplasm. In terms of biological role, participates actively in the response to hyperosmotic and heat shock by preventing the aggregation of stress-denatured proteins, in association with DnaK and GrpE. It is the nucleotide exchange factor for DnaK and may function as a thermosensor. Unfolded proteins bind initially to DnaJ; upon interaction with the DnaJ-bound protein, DnaK hydrolyzes its bound ATP, resulting in the formation of a stable complex. GrpE releases ADP from DnaK; ATP binding to DnaK triggers the release of the substrate protein, thus completing the reaction cycle. Several rounds of ATP-dependent interactions between DnaJ, DnaK and GrpE are required for fully efficient folding. The chain is Protein GrpE from Streptococcus suis (strain 98HAH33).